Consider the following 179-residue polypeptide: GTP-dependent dephospho-CoA kinase (179 aa).

Asp-49, Val-50, Val-51, Asp-68, Lys-70, and Glu-126 together coordinate GTP.

This sequence belongs to the GTP-dependent DPCK family.

The enzyme catalyses 3'-dephospho-CoA + GTP = GDP + CoA + H(+). Its pathway is cofactor biosynthesis; coenzyme A biosynthesis. In terms of biological role, catalyzes the GTP-dependent phosphorylation of the 3'-hydroxyl group of dephosphocoenzyme A to form coenzyme A (CoA). The sequence is that of GTP-dependent dephospho-CoA kinase from Pyrococcus abyssi (strain GE5 / Orsay).